Here is a 378-residue protein sequence, read N- to C-terminus: MSHVDDGFRSLTLKRFPQTDDVNPLLAWEAADEYLLQQLDETEIRGPVLILNDTFGALSCALAEHSPYSIGDSYLSELGTRENLRHNGIAESSVTFLDSTADYPQAPGVVLIKVPKTLALLEQQLRALRKVVTAQTRIIAGAKARDIHTSTLELFEKVLGPTTTTLAWKKARLINCTFSHPQLADAPQTLSWKLEDTGWTIHNHANVFSRTGLDIGARFFMQHLPENLDGEIVDLGCGNGVIGLSLLAKNPQAKVVFVDESPMAVDSSRLNVETNLPEAFERCEFMINNALSGVEPFRFNAVFCNPPFHQKHALTDNIAWEMFHHARRCLKINGELYIVANRHLDYFHKLKKIFGNCATIATNNKFVILKAVKQGRRR.

The protein belongs to the methyltransferase superfamily. RlmG family.

The protein localises to the cytoplasm. The enzyme catalyses guanosine(1835) in 23S rRNA + S-adenosyl-L-methionine = N(2)-methylguanosine(1835) in 23S rRNA + S-adenosyl-L-homocysteine + H(+). Functionally, specifically methylates the guanine in position 1835 (m2G1835) of 23S rRNA. This Salmonella agona (strain SL483) protein is Ribosomal RNA large subunit methyltransferase G.